The chain runs to 379 residues: PqqA peptide cyclase (379 aa).

The Radical SAM core domain occupies 8–220 (LPAPIGLLAE…IRVVEEARER (213 aa)). Positions 22, 26, and 29 each coordinate [4Fe-4S] cluster.

It belongs to the radical SAM superfamily. PqqE family. As to quaternary structure, interacts with PqqD. The interaction is necessary for activity of PqqE. Requires [4Fe-4S] cluster as cofactor.

The catalysed reaction is [PQQ precursor protein] + S-adenosyl-L-methionine = E-Y cross-linked-[PQQ precursor protein] + 5'-deoxyadenosine + L-methionine + H(+). Its pathway is cofactor biosynthesis; pyrroloquinoline quinone biosynthesis. Functionally, catalyzes the cross-linking of a glutamate residue and a tyrosine residue in the PqqA protein as part of the biosynthesis of pyrroloquinoline quinone (PQQ). The protein is PqqA peptide cyclase of Methylobacterium sp. (strain 4-46).